A 496-amino-acid chain; its full sequence is Glycylpeptide N-tetradecanoyltransferase 1 (496 aa).

The segment at 1-82 (MADESETAVK…SAQDQPVKMN (82 aa)) is disordered. A phosphoserine mark is found at Ser31 and Ser47. Residues 55-66 (KKKKKKQKKKKE) show a composition bias toward basic residues. Residue Ser83 is modified to Phosphoserine. Gln118, Phe119, Trp120, Phe247, Leu248, Cys249, Val250, Ser256, Arg258, Val259, and Ala260 together coordinate tetradecanoyl-CoA.

The protein belongs to the NMT family.

It is found in the cytoplasm. The protein resides in the cytosol. It localises to the membrane. It catalyses the reaction N-terminal glycyl-[protein] + tetradecanoyl-CoA = N-tetradecanoylglycyl-[protein] + CoA + H(+). It carries out the reaction N-terminal glycyl-L-lysyl-[protein] + tetradecanoyl-CoA = N-terminal glycyl-(N(6)-tetradecanoyl)-L-lysyl-[protein] + CoA + H(+). In terms of biological role, adds a myristoyl group to the N-terminal glycine residue of certain cellular and viral proteins. Also able to mediate N-terminal lysine myristoylation of proteins: catalyzes myristoylation of ARF6 on both 'Gly-2' and 'Lys-3'. Lysine myristoylation is required to maintain ARF6 on membranes during the GTPase cycle. The sequence is that of Glycylpeptide N-tetradecanoyltransferase 1 (NMT1) from Pongo abelii (Sumatran orangutan).